The primary structure comprises 937 residues: CAP-Gly domain-containing linker protein 1 homolog (937 aa).

One can recognise a CAP-Gly domain in the interval 39-81; that stretch reads GPIHGKDGMFCGIELLEPNGKHDGTFQGVSYFIATPYHGIFAP. Disordered stretches follow at residues 90-131 and 264-548; these read EELP…VMST and LPND…SRLQ. A compositionally biased stretch (polar residues) spans 268–281; the sequence is LNANFSNKNSTTTF. A compositionally biased stretch (basic and acidic residues) spans 285-295; it reads ETPKVEIRENG. Positions 296 to 309 are enriched in polar residues; the sequence is NLDNSIETPPQQSP. 4 stretches are compositionally biased toward basic and acidic residues: residues 317-353, 383-396, 409-424, and 463-473; these read HESD…KEEP, IEAE…EIKS, PQKE…ETPR, and AKERVEKEKKI. A compositionally biased stretch (low complexity) spans 492-501; it reads SSIPSTSSAS. Coiled-coil stretches lie at residues 566–740 and 773–800; these read EDNE…VDEI and QQIE…DLMQ. Disordered stretches follow at residues 819 to 866 and 916 to 937; these read MESR…DSMN and PTIK…GLVM. The span at 832 to 844 shows a compositional bias: low complexity; that stretch reads RSRSSASGSRPIS. Over residues 845–858 the composition is skewed to polar residues; sequence MATSNGGDQRLSTS.

The sequence is that of CAP-Gly domain-containing linker protein 1 homolog from Caenorhabditis elegans.